We begin with the raw amino-acid sequence, 181 residues long: Calmodulin-like protein 6 (181 aa).

EF-hand domains lie at 33–68, 69–104, 107–142, and 143–178; these read EQIK…LGIN, PTKS…YHEK, NQES…AGEP, and LNEV…ESFK. The Ca(2+) site is built by Asp156, Asp158, Asp160, Thr162, and Glu167.

This sequence belongs to the calmodulin family. Calglandulin subfamily. In terms of tissue distribution, expressed in prostate, thymus, heart, skeleton muscle, bone marrow and ovary.

It localises to the cytoplasm. It is found in the nucleus. This is Calmodulin-like protein 6 (CALML6) from Homo sapiens (Human).